A 175-amino-acid chain; its full sequence is Glycine-rich RNA-binding protein 1 (175 aa).

The region spanning 3–81 (AKVYVGNLSW…RRIRVNMANS (79 aa)) is the RRM domain. The disordered stretch occupies residues 114–175 (GQPGGFQQPG…GYGGYNGQSQ (62 aa)). The span at 122–131 (PGGFQQQGGY) shows a compositional bias: low complexity. Residues 132 to 141 (PQQGGYGGYQ) show a composition bias toward gly residues. Over residues 142–162 (QPGFQPQQGGYGAPQQGYGAP) the composition is skewed to low complexity. Positions 163-175 (QQGGYGGYNGQSQ) are enriched in gly residues.

Belongs to the glycine-rich RNA-binding protein family. As to quaternary structure, part of large ribonucleoprotein complexes (mRNPs) containing RNA-binding proteins RRM4 and PAB1, endosome-binding protein UPA1, core scaffold protein UPA2 and associated factor GRP1.

The protein localises to the endosome. Component of endosomal mRNA transport that regulates polarity of the infectious hyphae by transporting a broad spectrum of cargo mRNAs from the nucleus to cell poles. In Mycosarcoma maydis (Corn smut fungus), this protein is Glycine-rich RNA-binding protein 1.